The following is a 180-amino-acid chain: ADP ribosylation factor 4 (180 aa).

Glycine 2 is lipidated: N-myristoyl glycine. Residues 24 to 31 (GLDAAGKT), 67 to 71 (DVGGQ), and 126 to 129 (NKQD) each bind GTP.

The protein belongs to the small GTPase superfamily. Arf family. In terms of tissue distribution, uniformly distributed throughout adults.

It is found in the golgi apparatus. GTP-binding protein involved in protein trafficking; may modulate vesicle budding and uncoating within the Golgi apparatus. This chain is ADP ribosylation factor 4, found in Drosophila melanogaster (Fruit fly).